A 128-amino-acid chain; its full sequence is 3-aminoacrylate deaminase RutC (128 aa).

This sequence belongs to the RutC family.

It carries out the reaction (Z)-3-aminoacrylate + H2O + H(+) = 3-oxopropanoate + NH4(+). Its function is as follows. Involved in pyrimidine catabolism. Catalyzes the deamination of 3-aminoacrylate to malonic semialdehyde, a reaction that can also occur spontaneously. RutC may facilitate the reaction and modulate the metabolic fitness, rather than catalyzing essential functions. The chain is 3-aminoacrylate deaminase RutC from Agrobacterium fabrum (strain C58 / ATCC 33970) (Agrobacterium tumefaciens (strain C58)).